The following is a 100-amino-acid chain: Large ribosomal subunit protein bL28 (100 aa).

Belongs to the bacterial ribosomal protein bL28 family.

In Gluconacetobacter diazotrophicus (strain ATCC 49037 / DSM 5601 / CCUG 37298 / CIP 103539 / LMG 7603 / PAl5), this protein is Large ribosomal subunit protein bL28.